We begin with the raw amino-acid sequence, 451 residues long: uncharacterized protein (451 aa).

The HD domain occupies 50-147; the sequence is RFEHSLGTMF…DVDADRMDYL (98 aa).

This is an uncharacterized protein from Methanocaldococcus jannaschii (strain ATCC 43067 / DSM 2661 / JAL-1 / JCM 10045 / NBRC 100440) (Methanococcus jannaschii).